A 502-amino-acid chain; its full sequence is Zinc finger C3HC-type protein 1 (502 aa).

An N-acetylalanine modification is found at Ala2. Ser24 is modified (phosphoserine). Phosphothreonine is present on Thr28. The interval 36–73 (IDEGIAPEEGGVDAKDTSATSQSVNGSPQAEQPSLEST) is disordered. Positions 52 to 72 (TSATSQSVNGSPQAEQPSLES) are enriched in polar residues. A phosphoserine mark is found at Ser58 and Ser62. Thr84 is subject to Phosphothreonine. A C3HC-type zinc finger spans residues 102–156 (CAKYGWVTVECDMLKCSSCQAFLCASLQPAFDFDRYKQRCAELKKALCTAHEKFC). An F-box-like region spans residues 170 to 210 (LPLDEPAILVSEFLDRFQSLCHLDLQLPSLRPEDLKTMCLT). A disordered region spans residues 302 to 423 (SSPIPGLEGR…SSRSFFDPTS (122 aa)). 2 positions are modified to phosphoserine: Ser321 and Ser329. Residues 327–338 (TRSQDATFSPGS) show a composition bias toward polar residues. Thr333 carries the phosphothreonine modification. Phosphoserine is present on residues Ser335, Ser338, Ser344, Ser354, Ser359, and Ser370. Positions 351 to 360 (RTRSWDSSSP) are enriched in polar residues. Residues 371 to 380 (PTTRTRPVTR) are compositionally biased toward low complexity. At Ser381 the chain carries Phosphoserine. Phosphothreonine is present on residues Thr384 and Thr387. Position 395 is a phosphoserine (Ser395). The short motif at 396–402 (PLRKAKR) is the Nuclear localization signal element. 2 positions are modified to phosphoserine: Ser407 and Ser483. Low complexity predominate over residues 407 to 422 (SSSSSDTSSRSFFDPT).

Interacts with TPR; this interaction mediates ZC3HC1 nuclear envelopes (NE)-association but also required for proper positioning of a substantial amount of TPR at the nuclear basket (NB). Post-translationally, phosphorylated. May also be weakly phosphorylated on Tyr residues. As to expression, widely expressed. Highly expressed in heart, skeletal muscle and testis. Expressed in brain, placenta, lung, kidney, liver, pancreas, spleen, thymus, prostate, ovary small intestine and colon. Weakly or not expressed in leukocytes.

It localises to the nucleus. The protein resides in the nucleus envelope. Its function is as follows. Required for proper positioning of a substantial amount of TPR at the nuclear basket (NB) through interaction with TPR. The sequence is that of Zinc finger C3HC-type protein 1 from Homo sapiens (Human).